We begin with the raw amino-acid sequence, 254 residues long: PSME3-interacting protein (254 aa).

M1 carries the post-translational modification N-acetylmethionine. S17 is modified (phosphoserine). The span at 22–39 shows a compositional bias: basic and acidic residues; it reads DERRKRRQEEWEKVRKPE. Positions 22 to 52 are disordered; that stretch reads DERRKRRQEEWEKVRKPEDPEECPEEVYDPR. K139 carries the N6-acetyllysine modification. The interval 155-195 is disordered; sequence GAVKHKSSESGNSVKRLKPDPEPDDKNQEPSSCKSLGNTSL. Residues 171 to 182 show a composition bias toward basic and acidic residues; that stretch reads LKPDPEPDDKNQ. The span at 183-195 shows a compositional bias: polar residues; that stretch reads EPSSCKSLGNTSL. The interaction with PSME3 stretch occupies residues 201 to 254; that stretch reads HCPSAAVCIGILPGLGAYSGSSDSESSSDSEGTINATGKIVSSIFRTNTFLEAP. A phosphoserine; by CK2 mark is found at S222 and S228.

As to quaternary structure, interacts (via C-terminus) with both free and 20S proteasome-bound forms of the proteasome activator complex subunit PSME3; the interaction is direct. Post-translationally, phosphorylation by CK2 stabilizes the interaction with PSME3.

The protein resides in the nucleus. Promotes the association of the proteasome activator complex subunit PSME3 with the 20S proteasome and regulates its activity. Inhibits PSME3-mediated degradation of some proteasome substrates, probably by affecting their diffusion rate into the catalytic chamber of the proteasome. Also inhibits the interaction of PSME3 with COIL, inhibits accumulation of PSME3 in Cajal bodies and positively regulates the number of Cajal bodies in the nucleus. The polypeptide is PSME3-interacting protein (Homo sapiens (Human)).